Reading from the N-terminus, the 156-residue chain is Small ribosomal subunit protein uS7 (156 aa).

The protein belongs to the universal ribosomal protein uS7 family. In terms of assembly, part of the 30S ribosomal subunit. Contacts proteins S9 and S11.

Functionally, one of the primary rRNA binding proteins, it binds directly to 16S rRNA where it nucleates assembly of the head domain of the 30S subunit. Is located at the subunit interface close to the decoding center, probably blocks exit of the E-site tRNA. This chain is Small ribosomal subunit protein uS7, found in Tremblaya princeps.